Here is a 1127-residue protein sequence, read N- to C-terminus: Inactive phospholipase C-like protein 2 (1127 aa).

Gly residues predominate over residues 1–11 (MAECGRGGAAG). Residues 1-128 (MAECGRGGAA…KKTVSFSSMP (128 aa)) form a disordered region. At alanine 2 the chain carries N-acetylalanine. Serine 17 carries the phosphoserine modification. Residues 19–31 (GPALGAKGALKAG) show a composition bias toward low complexity. Over residues 32–42 (VGEGGGGGGRL) the composition is skewed to gly residues. The residue at position 84 (threonine 84) is a Phosphothreonine. One can recognise a PH domain in the interval 141 to 251 (NSMVEGSELK…WVTGLRYLIS (111 aa)). One can recognise a PI-PLC X-box domain in the interval 426–570 (QDMKQPLSHY…LKGKILIKAK (145 aa)). Threonine 584 carries the phosphothreonine modification. Positions 618-734 (LSELVSICKS…GYVLRPAIMR (117 aa)) constitute a PI-PLC Y-box domain. One can recognise a C2 domain in the interval 734–863 (REEVSFFSAN…TGYRHVPLQS (130 aa)). The segment at 1101 to 1127 (GTENADVQKPRRSLEVIPEKANDETGE) is disordered. Basic and acidic residues predominate over residues 1106–1127 (DVQKPRRSLEVIPEKANDETGE). Phosphoserine is present on serine 1113.

It is found in the cytoplasm. In terms of biological role, may play an role in the regulation of Ins(1,4,5)P3 around the endoplasmic reticulum. This Homo sapiens (Human) protein is Inactive phospholipase C-like protein 2 (PLCL2).